The sequence spans 354 residues: N-acylethanolamine-hydrolyzing acid amidase (354 aa).

Positions 1 to 22 are cleaved as a signal peptide; that stretch reads MRSPGIVLLLLLLLLLPPGAAP. Asn35 and Asn104 each carry an N-linked (GlcNAc...) asparagine glycan. The active-site Nucleophile is the Cys123. Asn306, Asn312, and Asn352 each carry an N-linked (GlcNAc...) asparagine glycan.

Belongs to the acid ceramidase family. Heterodimer of an alpha and a beta subunit, produced by autocatalytic cleavage. In terms of processing, N-glycosylated. Tunicamycin treatment causes a reduction in specific activity against N-palmitoylethanolamine. Post-translationally, autoproteolytic cleavage at pH 4.5 gives rise to the alpha and beta subunit. Cleavage gives rise to a conformation change that activates the enzyme. The same catalytic Cys residue mediates the autoproteolytic cleavage and subsequent hydrolysis of lipid substrates.

The protein localises to the lysosome. It is found in the membrane. It catalyses the reaction N-hexadecanoylethanolamine + H2O = ethanolamine + hexadecanoate. The catalysed reaction is an N-(long-chain fatty acyl)ethanolamine + H2O = a long-chain fatty acid + ethanolamine. It carries out the reaction N-dodecanoylethanolamine + H2O = dodecanoate + ethanolamine. The enzyme catalyses N-tetradecanoylethanolamine + H2O = tetradecanoate + ethanolamine. It catalyses the reaction an N-acylsphing-4-enine + H2O = sphing-4-enine + a fatty acid. The catalysed reaction is N-hexadecanoylsphing-4-enine + H2O = sphing-4-enine + hexadecanoate. It carries out the reaction N-dodecanoylsphing-4-enine + H2O = dodecanoate + sphing-4-enine. It participates in lipid metabolism; fatty acid metabolism. In terms of biological role, degrades bioactive fatty acid amides to their corresponding acids, with the following preference: N-palmitoylethanolamine &gt; N-myristoylethanolamine &gt; N-stearoylethanolamine &gt; N-oleoylethanolamine &gt; N-linoleoylethanolamine &gt; N-arachidonoylethanolamine. The sequence is that of N-acylethanolamine-hydrolyzing acid amidase from Cavia porcellus (Guinea pig).